The chain runs to 327 residues: 2-oxoglutarate-dependent dioxygenase traH (327 aa).

One can recognise a Fe2OG dioxygenase domain in the interval 183-290 (TTDAAMFLKL…YAVPAFWHGD (108 aa)). Residues H211, D213, and H270 each coordinate Fe cation. Residue R280 participates in 2-oxoglutarate binding.

The protein belongs to the iron/ascorbate-dependent oxidoreductase family. The cofactor is Fe(2+).

Its pathway is secondary metabolite biosynthesis. 2-oxoglutarate-dependent dioxygenase; part of the tra gene cluster that produces terrestric acid. The clavatol biosynthesis cluster cla and the terrestric acid cluster tra are both involved in the production of peniphenones and penilactones. The non-reducing PKS claF is responsible for the formation of clavatol from successive condensations of 3 malonyl-CoA units, presumably with a simple acetyl-CoA starter unit, and 2 methylation steps. The esterase claE probably collaborates with claF by catalyzing the hydrolysis of ACP-bound acyl intermediates to free the ACP from stalled intermediates. The clavatol oxidase claD then converts clavatol to hydroxyclavatol. Spontaneous dehydration of hydroxyclavatol leads to the accumulation of the highly active ortho-quinone methide. On the other hand, the PKS-NRPS hybrid traA is involved in the formation of crustosic acid, with the help of traB and traD. The polyketide synthase module (PKS) of traA is responsible for the synthesis of the polyketide backbone via the condensation of an acetyl-CoA starter unit with 3 malonyl-CoA units. The downstream nonribosomal peptide synthetase (NRPS) module then amidates the carboxyl end of the polyketide with L-malic acid. Because traA lacks a designated enoylreductase (ER) domain, the required activity is provided the enoyl reductase traG. Crustosic acid undergoes decarboxylation and isomerization to the terrestric acid, catalyzed by the 2-oxoglutarate-dependent dioxygenase traH. Both acids are further converted to the 2 gamma-butyrolactones (R)-5-methyltetronic acid and (S)-5-carboxylmethyltetronic acid, with involvement of the cytochrome P450 monooxygenase claJ. Spontaneous addition of the methide to these gamma-butyrolactones leads to peniphenone D and penilactone D, which undergo again stereospecific attacking by methide to give penilactones A and B. This chain is 2-oxoglutarate-dependent dioxygenase traH, found in Penicillium crustosum (Blue mold fungus).